Here is a 423-residue protein sequence, read N- to C-terminus: Serine--tRNA ligase (423 aa).

231-233 (TGE) lines the L-serine pocket. An ATP-binding site is contributed by 262 to 264 (RSE). Position 285 (Glu-285) interacts with L-serine. Position 349–352 (349–352 (EISS)) interacts with ATP. Ser-385 is an L-serine binding site.

This sequence belongs to the class-II aminoacyl-tRNA synthetase family. Type-1 seryl-tRNA synthetase subfamily. As to quaternary structure, homodimer. The tRNA molecule binds across the dimer.

It is found in the cytoplasm. The catalysed reaction is tRNA(Ser) + L-serine + ATP = L-seryl-tRNA(Ser) + AMP + diphosphate + H(+). It catalyses the reaction tRNA(Sec) + L-serine + ATP = L-seryl-tRNA(Sec) + AMP + diphosphate + H(+). It participates in aminoacyl-tRNA biosynthesis; selenocysteinyl-tRNA(Sec) biosynthesis; L-seryl-tRNA(Sec) from L-serine and tRNA(Sec): step 1/1. In terms of biological role, catalyzes the attachment of serine to tRNA(Ser). Is also able to aminoacylate tRNA(Sec) with serine, to form the misacylated tRNA L-seryl-tRNA(Sec), which will be further converted into selenocysteinyl-tRNA(Sec). This Coxiella burnetii (strain CbuG_Q212) (Coxiella burnetii (strain Q212)) protein is Serine--tRNA ligase.